The primary structure comprises 896 residues: Zinc finger protein 574 (896 aa).

C2H2-type zinc fingers lie at residues 16 to 38 and 76 to 98; these read YVCS…QNSH and YQCL…QELH. The residue at position 113 (serine 113) is a Phosphoserine. The segment at 126–148 adopts a C2H2-type 3 zinc-finger fold; it reads YECVDCKALFASQELWLNHRQTH. Serine 164 is modified (phosphoserine). The C2H2-type 4 zinc finger occupies 214-236; that stretch reads YKCSECSQLFQLPADFLEHQATH. The segment at 239-301 is disordered; the sequence is APVPESQEPA…RARRNNSGEA (63 aa). The span at 247–257 shows a compositional bias: polar residues; sequence PALQQEVQASS. Residues 274–287 show a composition bias toward basic and acidic residues; it reads HSYELRNGEAIGRD. At serine 298 the chain carries Phosphoserine. 4 C2H2-type zinc fingers span residues 309–331, 336–358, 364–386, and 392–413; these read LFCS…LRSH, FKCP…LGDH, FLCV…RRAH, and HSCP…RRTH. The interval 434–460 is disordered; it reads FPEPAPAETGEPEAPEPPVSEETSAGP. A C2H2-type 9 zinc finger spans residues 466 to 489; the sequence is YRCLLCSREFGKALQLTRHQRFVH. The C2H2-type 10; degenerate zinc finger occupies 495–517; that stretch reads HKCSICGKMFKKKSHVRNHLRTH. 4 consecutive C2H2-type zinc fingers follow at residues 523–545, 551–573, 579–601, and 607–630; these read FPCP…RLTH, YRCG…RLVH, YRCQ…RYHH, and YKCR…LVVH. The C2H2-type 15; degenerate zinc-finger motif lies at 636-659; that stretch reads HRCPSCGAAFPSSLRLREHRCAAA. The C2H2-type 16 zinc finger occupies 667–689; it reads FECGTCGKKVGSAARLQAHEAAH. The disordered stretch occupies residues 687-733; sequence AAHAAAGPGEVLAKEPPAPRAPRATRAPVASPAALGSTATASPAAPA. Low complexity predominate over residues 707–732; it reads APRATRAPVASPAALGSTATASPAAP. Serine 717 is modified (phosphoserine). Threonine 724 carries the phosphothreonine modification. Serine 728 carries the phosphoserine modification. C2H2-type zinc fingers lie at residues 738–760, 766–788, 794–816, and 822–844; these read LECS…RRIH, YPCP…RRLH, FACE…RRIH, and YSCP…RKTH. Arginine 832 carries the asymmetric dimethylarginine modification.

It belongs to the krueppel C2H2-type zinc-finger protein family.

It is found in the nucleus. May be involved in transcriptional regulation. The polypeptide is Zinc finger protein 574 (ZNF574) (Homo sapiens (Human)).